A 458-amino-acid chain; its full sequence is NADH-quinone oxidoreductase subunit N (458 aa).

The next 13 helical transmembrane spans lie at 3 to 23 (QYLF…LLFL), 29 to 49 (FGLI…TCTS), 64 to 84 (QNVK…AIAV), 92 to 112 (FSVL…SSTL), 147 to 167 (TLLG…IFVV), 188 to 208 (ILLF…HAWI), 222 to 242 (FFAV…ISNL), 265 to 285 (NILF…AFGQ), 291 to 311 (FIGF…SNSA), 320 to 340 (IAYA…VLML), 358 to 378 (VALA…FIGF), 394 to 414 (IPTA…YARI), and 437 to 457 (LLTS…VLLI).

Belongs to the complex I subunit 2 family. In terms of assembly, NDH-1 is composed of 14 different subunits. Subunits NuoA, H, J, K, L, M, N constitute the membrane sector of the complex.

It is found in the cell inner membrane. The enzyme catalyses a quinone + NADH + 5 H(+)(in) = a quinol + NAD(+) + 4 H(+)(out). NDH-1 shuttles electrons from NADH, via FMN and iron-sulfur (Fe-S) centers, to quinones in the respiratory chain. The immediate electron acceptor for the enzyme in this species is believed to be ubiquinone. Couples the redox reaction to proton translocation (for every two electrons transferred, four hydrogen ions are translocated across the cytoplasmic membrane), and thus conserves the redox energy in a proton gradient. This chain is NADH-quinone oxidoreductase subunit N, found in Neorickettsia risticii (strain Illinois).